Consider the following 847-residue polypeptide: Cancer-associated gene 1 protein homolog (847 aa).

Residues 118-161 (EEKPELQSQVYNDPADASQKPDPLKEESLMESSTSENKDELVHE) form a disordered region. Residues 377-567 (NVILEKNDIN…AAKREAQACT (191 aa)) adopt a coiled-coil conformation.

The polypeptide is Cancer-associated gene 1 protein homolog (Cage1) (Rattus norvegicus (Rat)).